The chain runs to 462 residues: MAAGGPCPAAAGGGPGGASCSVGAPGGVSMFRWLEVLEKEFDKAFVDVDLLLGEIDPDQADITYEGRQKMTSLSSCFAQLCHKAQSVSQINHKLEAQLVDLKSELTETQAEKVVLEKEVHDQLLQLHSIQLQLHAKTGQSVDSGTIKAKLSGPSVEELERELEANKKEKMKEAQLEAEVKLLRKEDEALRGHIAVLQAEVYGARLAAKYLDKELAGRVQQIQLLGRDMKGPAHDKLWNQLEAEIHLHRHKTVIRACRGRNDLKRPMQAPPGHDQDSLKKSQGVGPIRKVLLLKEDHEGLGISITGGKEHGVPILISEIHPGQPADRCGGLHVGDAILAVDGVNLRDTKHKEAVTVLSQQRGEIEFEVVYVAPEVDSDDENVEYEDESGHRYRLYLDELEGGGNPGASCKDPSGEIKVLQGFNKKAVTDTHENGDLGTASETPLDDGASKLDDLHTLYHKKSY.

Residues 83–194 (KAQSVSQINH…EDEALRGHIA (112 aa)) are a coiled coil. In terms of domain architecture, PDZ spans 288-371 (KVLLLKEDHE…EIEFEVVYVA (84 aa)). The segment at 427-449 (TDTHENGDLGTASETPLDDGASK) is disordered.

In terms of assembly, homooligomer. Interacts with FZD5. Interacts with FZD8. Interacts with GRID2 and BECN1. Interacts with CSPG5. Interacts with CLCN3. Interacts with STX6. Interacts with CFTR. Interacts with ASIC3. Interacts with GOLGA3. Interacts with NLGN1. Interacts with RHOQ. Interacts with MARCHF2; the interaction leads to CFTR ubiquitination and degradation. May interact with CACNG2. Interacts with CCDC62.

The protein resides in the cytoplasm. Its subcellular location is the golgi apparatus membrane. It is found in the golgi apparatus. It localises to the trans-Golgi network membrane. The protein localises to the synapse. The protein resides in the postsynaptic density. Its subcellular location is the cell projection. It is found in the dendrite. Its function is as follows. Plays a role in intracellular protein trafficking and degradation. May regulate CFTR chloride currents and acid-induced ASIC3 currents by modulating cell surface expression of both channels. May also regulate the intracellular trafficking of the ADR1B receptor. May play a role in autophagy. Together with MARCHF2 mediates the ubiquitination and lysosomal degradation of CFTR. Overexpression results in CFTR intracellular retention and degradation in the lysosomes. The polypeptide is Golgi-associated PDZ and coiled-coil motif-containing protein (GOPC) (Pongo abelii (Sumatran orangutan)).